A 316-amino-acid polypeptide reads, in one-letter code: Apolipoprotein E (316 aa).

A signal peptide spans 1–18 (MKVLWVALVITLLAGCQA). 8 tandem repeats follow at residues 79-100 (VLMD…GQLG), 101-122 (PIAQ…ARLA), 123-144 (SDME…AMMG), 145-166 (QTTD…KRLL), 167-188 (RDAE…EGSE), 189-210 (RSVS…VRAA), 211-232 (TVGT…QKLR), and 233-254 (GRME…EQLE). An 8 X 22 AA approximate tandem repeats region spans residues 79–254 (VLMDETMKEV…HLEEMREQLE (176 aa)). Met-142 is modified (methionine sulfoxide). Residues 157 to 167 (HLRKLRKRLLR) form an LDL and other lipoprotein receptors binding region. 161 to 164 (LRKR) serves as a coordination point for heparin. Residues 209 to 289 (AATVGTLASQ…SWFEPLVEDM (81 aa)) form a lipid-binding and lipoprotein association region. A heparin-binding site is contributed by 228-235 (HQKLRGRM). Residues 265 to 316 (SQMRLQAEAFQARLKSWFEPLVEDMQRQWAGLVEKVQLAMATSPTSAPIENS) form a homooligomerization region. Residues 277 to 289 (RLKSWFEPLVEDM) are specificity for association with VLDL.

Belongs to the apolipoprotein A1/A4/E family. In terms of assembly, homotetramer. May interact with ABCA1; functionally associated with ABCA1 in the biogenesis of HDLs. May interact with APP/A4 amyloid-beta peptide; the interaction is extremely stable in vitro but its physiological significance is unclear. May interact with MAPT. May interact with MAP2. In the cerebrospinal fluid, interacts with secreted SORL1. Interacts with PMEL; this allows the loading of PMEL luminal fragment on ILVs to induce fibril nucleation. APOE exists as multiple glycosylated and sialylated glycoforms within cells and in plasma. The extent of glycosylation and sialylation are tissue and context specific. Post-translationally, glycated in plasma VLDL. In terms of processing, phosphorylated by FAM20C in the extracellular medium.

The protein resides in the secreted. The protein localises to the extracellular space. Its subcellular location is the extracellular matrix. It is found in the extracellular vesicle. It localises to the endosome. The protein resides in the multivesicular body. In terms of biological role, APOE is an apolipoprotein, a protein associating with lipid particles, that mainly functions in lipoprotein-mediated lipid transport between organs via the plasma and interstitial fluids. APOE is a core component of plasma lipoproteins and is involved in their production, conversion and clearance. Apolipoproteins are amphipathic molecules that interact both with lipids of the lipoprotein particle core and the aqueous environment of the plasma. As such, APOE associates with chylomicrons, chylomicron remnants, very low density lipoproteins (VLDL) and intermediate density lipoproteins (IDL) but shows a preferential binding to high-density lipoproteins (HDL). It also binds a wide range of cellular receptors including the LDL receptor/LDLR and the very low-density lipoprotein receptor/VLDLR that mediate the cellular uptake of the APOE-containing lipoprotein particles. Finally, APOE also has a heparin-binding activity and binds heparan-sulfate proteoglycans on the surface of cells, a property that supports the capture and the receptor-mediated uptake of APOE-containing lipoproteins by cells. The protein is Apolipoprotein E (APOE) of Orcinus orca (Killer whale).